Here is a 492-residue protein sequence, read N- to C-terminus: Histone-lysine N-methyltransferase SUVR4 (492 aa).

Residues 112–138 are disordered; the sequence is ETRSASSGSSIQVVQKQPQLSNGDRKR. The segment covering 113–133 has biased composition (polar residues); that stretch reads TRSASSGSSIQVVQKQPQLSN. Residues C196, C197, C200, C204, C213, C281, C285, C287, and C291 each coordinate Zn(2+). In terms of domain architecture, Pre-SET spans 196–299; the sequence is CCANCKGNCL…QCGNRVVQRG (104 aa). The region spanning 302–435 is the SET domain; the sequence is CQLQVYFTQE…AMDELTWDYM (134 aa). Residues 313-315 and 391-392 contribute to the S-adenosyl-L-methionine site; these read KGW and NH. C394 is a Zn(2+) binding site. Position 434 (Y434) interacts with S-adenosyl-L-methionine. The Post-SET domain occupies 446–462; that stretch reads KAFRCCCGSESCRDRKI. 3 residues coordinate Zn(2+): C450, C452, and C457. The disordered stretch occupies residues 463–492; sequence KGSQGKSIERRKIVSAKKQQGSKEVSKKRK.

The protein belongs to the class V-like SAM-binding methyltransferase superfamily. Histone-lysine methyltransferase family. Interacts with ubiquitin.

It localises to the nucleus. Its subcellular location is the chromosome. It catalyses the reaction N(6)-methyl-L-lysyl(9)-[histone H3] + S-adenosyl-L-methionine = N(6),N(6)-dimethyl-L-lysyl(9)-[histone H3] + S-adenosyl-L-homocysteine + H(+). It carries out the reaction N(6),N(6)-dimethyl-L-lysyl(9)-[histone H3] + S-adenosyl-L-methionine = N(6),N(6),N(6)-trimethyl-L-lysyl(9)-[histone H3] + S-adenosyl-L-homocysteine + H(+). In terms of biological role, histone methyltransferase that converts monomethylated 'Lys-9' of histone H3 (H3K9me1) to dimethylated 'Lys-9' (H3K9me2) in the absence of bound ubiquitin, and to trimethylated 'Lys-9' (H3K9me3) in the presence of bound ubiquitin. Acts in a locus-specific manner and contributes to the transcriptional silencing of pseudogenes and transposons. H3 'Lys-9' methylation represents a specific tag for epigenetic transcriptional repression. This chain is Histone-lysine N-methyltransferase SUVR4 (SUVR4), found in Arabidopsis thaliana (Mouse-ear cress).